A 143-amino-acid polypeptide reads, in one-letter code: Large ribosomal subunit protein eL28z (143 aa).

This sequence belongs to the eukaryotic ribosomal protein eL28 family. Component of the large ribosomal subunit. In terms of tissue distribution, expressed in seedlings, roots, stems, leaves, inflorescences and siliques.

The protein localises to the cytoplasm. It is found in the nucleus. Its subcellular location is the nucleolus. It localises to the nucleoplasm. In terms of biological role, component of the large ribosomal subunit. Essential in leaf polarity establishment, probably having a role for translation in leaf dorsoventral patterning to specify leaf adaxial identity. This Arabidopsis thaliana (Mouse-ear cress) protein is Large ribosomal subunit protein eL28z.